The primary structure comprises 123 residues: Seminal vesicle secretory protein 5 (123 aa).

The N-terminal stretch at 1-21 is a signal peptide; that stretch reads MSPTGFFLLTVLLVLVTEAAS. A disordered region spans residues 50 to 123; it reads GSSSTFGAFS…TKVKTRITRK (74 aa). A compositionally biased stretch (low complexity) spans 64-75; sequence SRSNFKSKSPSS. Basic and acidic residues predominate over residues 77–87; the sequence is TREKVNEESRS.

This sequence belongs to the SVP2/SVP5/SVP6 family. In terms of tissue distribution, testis.

The protein localises to the secreted. It localises to the extracellular space. The protein is Seminal vesicle secretory protein 5 (Svs5) of Rattus norvegicus (Rat).